The sequence spans 290 residues: UPF0761 membrane protein CKO_03126 (290 aa).

6 helical membrane-spanning segments follow: residues 44–64, 104–124, 140–160, 183–203, 210–230, and 244–264; these read LLSL…FPMF, VGAC…DSAL, FAVY…SLAI, VFPL…VPTT, AVVG…GFAL, and VLAV…IVLL.

Belongs to the UPF0761 family.

The protein localises to the cell inner membrane. In Citrobacter koseri (strain ATCC BAA-895 / CDC 4225-83 / SGSC4696), this protein is UPF0761 membrane protein CKO_03126.